Here is a 96-residue protein sequence, read N- to C-terminus: UPF0235 protein YggU (96 aa).

The protein belongs to the UPF0235 family.

In Shigella flexneri, this protein is UPF0235 protein YggU.